We begin with the raw amino-acid sequence, 510 residues long: Histidine ammonia-lyase (510 aa).

The segment at residues 143–145 (ASG) is a cross-link (5-imidazolinone (Ala-Gly)). The residue at position 144 (S144) is a 2,3-didehydroalanine (Ser).

It belongs to the PAL/histidase family. Post-translationally, contains an active site 4-methylidene-imidazol-5-one (MIO), which is formed autocatalytically by cyclization and dehydration of residues Ala-Ser-Gly.

Its subcellular location is the cytoplasm. It catalyses the reaction L-histidine = trans-urocanate + NH4(+). Its pathway is amino-acid degradation; L-histidine degradation into L-glutamate; N-formimidoyl-L-glutamate from L-histidine: step 1/3. The chain is Histidine ammonia-lyase from Shewanella piezotolerans (strain WP3 / JCM 13877).